Here is a 735-residue protein sequence, read N- to C-terminus: Transcription factor RFX4 (735 aa).

The disordered stretch occupies residues 27–59 (NKRYSSHTSLGNVSNDENEEKENNRASKPHSTP). Over residues 32-41 (SHTSLGNVSN) the composition is skewed to polar residues. Residues 44–126 (NEEKENNRAS…RRLGTRGQSK (83 aa)) mediate DNA binding. A DNA-binding region (RFX-type winged-helix) is located at residues 61–136 (TLQWLEENYE…YHYYGIAVKE (76 aa)). The necessary for dimerization stretch occupies residues 315-487 (RFSQILRRQT…NELMRAMKGE (173 aa)). The segment at 501–538 (EATPPTPSPGPSFSPAKSATSVEVPPPSSPVSNPSPEY) is disordered.

The protein belongs to the RFX family. As to quaternary structure, homodimer. Heterodimer with RFX2 and RFX3. Binds DNA. Interacts with GPS2. Isoform 1: Brain-specific. Isoform 2: Testis-specific. Isoform 1: Highly expressed in the suprachiasmatic nucleus, the central pacemaker site of the circadian clock (at protein level).

Its subcellular location is the nucleus. Transcription factor that plays a role in early brain development. May activate transcription by interacting directly with the X-box. May activate transcription from CX3CL1 promoter through the X-box during brain development. May be required for neural tube ciliogenesis during embryogenesis. The protein is Transcription factor RFX4 (Rfx4) of Mus musculus (Mouse).